We begin with the raw amino-acid sequence, 71 residues long: V-type proton ATPase subunit e (71 aa).

Topologically, residues 1 to 2 (MS) are lumenal. A helical membrane pass occupies residues 3–23 (FFHVVFVAFVIAAIGAAGWFV). The Cytoplasmic portion of the chain corresponds to 24 to 35 (TPKGKNQTLLRT). A helical membrane pass occupies residues 36–56 (SLLLTLTCCYLMWAITYLCQL). Residues 57-71 (HPLITPRRSDLRMEY) are Lumenal-facing.

It belongs to the V-ATPase e1/e2 subunit family. V-ATPase is a heteromultimeric enzyme composed of a peripheral catalytic V1 complex (components A to H) attached to an integral membrane V0 proton pore complex (components: a, c, c', c'', d, e, f and VOA1).

It localises to the vacuole membrane. Subunit of the V0 complex of vacuolar(H+)-ATPase (V-ATPase), a multisubunit enzyme composed of a peripheral complex (V1) that hydrolyzes ATP and a membrane integral complex (V0) that translocates protons. V-ATPase is responsible for acidifying and maintaining the pH of intracellular compartments. The protein is V-type proton ATPase subunit e (VMA9) of Cryptococcus neoformans var. neoformans serotype D (strain JEC21 / ATCC MYA-565) (Filobasidiella neoformans).